A 382-amino-acid chain; its full sequence is D-galactonate dehydratase (382 aa).

D183 lines the Mg(2+) pocket. Residue H185 is the Proton donor of the active site. The Mg(2+) site is built by E209 and E235. H285 functions as the Proton acceptor in the catalytic mechanism.

Belongs to the mandelate racemase/muconate lactonizing enzyme family. GalD subfamily. Mg(2+) serves as cofactor.

It catalyses the reaction D-galactonate = 2-dehydro-3-deoxy-D-galactonate + H2O. The protein operates within carbohydrate acid metabolism; D-galactonate degradation; D-glyceraldehyde 3-phosphate and pyruvate from D-galactonate: step 1/3. Its function is as follows. Catalyzes the dehydration of D-galactonate to 2-keto-3-deoxy-D-galactonate. This chain is D-galactonate dehydratase, found in Ralstonia nicotianae (strain ATCC BAA-1114 / GMI1000) (Ralstonia solanacearum).